The following is a 128-amino-acid chain: Glycine cleavage system H protein (128 aa).

Residues 24–106 (VYTVGITEHA…YAEGFLFQIK (83 aa)) form the Lipoyl-binding domain. An N6-lipoyllysine modification is found at K65.

It belongs to the GcvH family. The glycine cleavage system is composed of four proteins: P, T, L and H. It depends on (R)-lipoate as a cofactor.

Its function is as follows. The glycine cleavage system catalyzes the degradation of glycine. The H protein shuttles the methylamine group of glycine from the P protein to the T protein. The protein is Glycine cleavage system H protein of Serratia proteamaculans (strain 568).